A 519-amino-acid polypeptide reads, in one-letter code: MSGVELQPESTQSEEKEEPKTAATTISSTEETKTENPNVALDNLAKTPIQLILQPTPQTPAKTPETPRIQKINNLKKSASFDSKNQPEDSKTPKQRDQLIEVPSDEVGRVENNIDNLPFYHGFMGRTECESMLSNHGDFLIRMTEVGRRVAYVISVRWHYQNSHVLVKRTKTKKLYWTKKYAFKSICELIAYHKLNQIPFYDNMTLICGLARHEWQLNNEQVTLNKKLGEGQFGEVHKGKLKTSVFTPPVIVAVKTLHQNHLSANEKILFLKEANVMLTLAHPNVIKFYGVCTMKEPIMIVMEFCDGSSLEDVLLSKESKVSSEDKILYLFHAACGIDYLHGKHVIHRDIAARNCLLNSKKVLKISDFGLSVKGVAIKERKGGCLPVKYMAPETLKKGFYSTASDIYSYGALVYEVYTDGKTPFESCGLRGNELRKAIIGKSVILTIDVECPEFVKAIFEQSRLYDTEQRISSKRIIEIFKEEAGMHELDATGLFGRIGSFFSRVRRQKEAEPSVPILT.

2 disordered regions span residues 1-39 and 73-97; these read MSGVELQPESTQSEEKEEPKTAATTISSTEETKTENPNV and NNLKKSASFDSKNQPEDSKTPKQRD. A compositionally biased stretch (polar residues) spans 73 to 84; that stretch reads NNLKKSASFDSK. Residues 85 to 97 are compositionally biased toward basic and acidic residues; it reads NQPEDSKTPKQRD. The SH2 domain occupies 119–208; it reads FYHGFMGRTE…PFYDNMTLIC (90 aa). Residues 146–154 and lysine 184 contribute to the ATP site; that span reads VGRRVAYVI. The 282-residue stretch at 209 to 490 folds into the Protein kinase domain; the sequence is GLARHEWQLN…KEEAGMHELD (282 aa). Residue aspartate 349 is the Proton acceptor of the active site.

Belongs to the protein kinase superfamily. Tyr protein kinase family. Fes/fps subfamily. As to expression, expressed in hermaphrodite larvae but not in adult. Expressed in both male larvae and adult.

The protein resides in the cell membrane. Its subcellular location is the cytoplasm. It catalyses the reaction L-tyrosyl-[protein] + ATP = O-phospho-L-tyrosyl-[protein] + ADP + H(+). In terms of biological role, probable non-receptor tyrosine-protein kinase which plays a role in spermatid activation (spermiogenesis) in hermaphrodites. This is Spermatocyte protein spe-8 from Caenorhabditis briggsae.